A 143-amino-acid polypeptide reads, in one-letter code: Putative glycerol transporter Lin0368 (143 aa).

The next 4 membrane-spanning stretches (helical) occupy residues 6–26, 27–47, 60–80, and 90–110; these read GMIG…PLAE, NYGI…MWFM, AAFV…DVFM, and LPTI…AAAI. Residues 118 to 143 are disordered; it reads HEAKQEKTEPGMNIKEEERLNENQLV.

It localises to the membrane. In terms of biological role, could be involved in the glycerol uptake either via facilitated diffusion or active transport. The chain is Putative glycerol transporter Lin0368 from Listeria innocua serovar 6a (strain ATCC BAA-680 / CLIP 11262).